The following is a 793-amino-acid chain: MAPDQSYQYPSPSYESIQTFYDTDEDWPGPRCGHTLTAVFVNNSHQLILFGGSTTAVANHNSSLPEISLDGVTNSVHSFDVLTRKWTRLNPIGDVPSPRACHAAALYGTLILIQGGIGPSGPSDGDVYMLDMTNNKWIKFLVGGETPSPRYGHVMDIAAQRWLVIFSGNNGNEILDDTWALDTRGPFSWDRLNPSGNQPSGRMYASGSSREDGIFLLCGGIDHSGVTLGDTYGLKMDSDNVWTPVPAVAPSPRYQHTAVFGGSKLHVIGGILNRARLIDGEAVVAVLDTETGEWVDTNQPETSASGANRQNQYQLMRRCHHAAASFGSHLYVHGGIREDVLLDDLLVAETSQSSSPEPEEDNPDNYMLLDDYLMDEPKPLSSEPEASSFIMRSTSEIAMDRLAEAHNLPTIENAFYDSAIEGYVPLQHGAETVGNRGGLVRTASLDQSTQDLHKKVISTLLRPKTWTPPANRDFFLSYLEVKHLCDEVEKIFMNEPTLLQLKVPIKVFGDIHGQYGDLMRLFHEYGHPSVEGDITHIDYLFLGDYVDRGQHSLEIIMLLFALKIEYPKNIHLIRGNHESLAMNRIYGFLTECEERMGESYGFEAWLKINQVFDYLPLAALLEKKVLCVHGGIGRAVTIEEIENIERPAFPDTGSMVLKDILWSDPTMNDTVLGIVDNARGEGVVSFGPDIVKAFLERNGLEMILRAHECVIDGFERFADGRLITVFSATNYCGTAQNAGAILVIGRDMVIYPKLIHPHPPPISSSEEDYTDKAWMQELNIEMPPTPARGESSE.

5 Kelch repeats span residues Ser-53–Thr-109, Leu-110–Gln-160, Ile-214–Gly-262, Lys-264–Gln-314, and His-329–Ser-388. Ser-395 and Ser-444 each carry phosphoserine. The Mn(2+) site is built by Asp-510, His-512, Asp-544, and Asn-576. His-577 (proton donor) is an active-site residue. 2 residues coordinate Mn(2+): His-629 and His-707. A Phosphoserine modification is found at Ser-764.

Belongs to the PPP phosphatase family. BSU subfamily. Interacts with CDG1, CDL1 and ASK7/BIN2. Mn(2+) is required as a cofactor. Phosphorylated at Ser-395 and Ser-444. Phosphorylated at Ser-764 by CDG1 and CDL1. In terms of tissue distribution, mainly expressed in young, elongating tissues. In young seedlings, it is expressed at the base of the hypocotyl, at the tip and most peripheral cell layers of cotyledons, and in the vascular cylinder of roots, particularly in the elongation zone and at the point of emergence of lateral roots. In mature plants, it is still present in the root vasculature, but almost completely absent in fully expanded stems and leaves. In flowers, it is mainly expressed in sepal veins, anther filaments, and in the style, suggesting that BSU1 is expressed in actively growing regions and apparently enriched in vascular tissues.

Its subcellular location is the nucleus. The enzyme catalyses O-phospho-L-seryl-[protein] + H2O = L-seryl-[protein] + phosphate. It catalyses the reaction O-phospho-L-threonyl-[protein] + H2O = L-threonyl-[protein] + phosphate. With respect to regulation, activated by phosphorylation at Ser-764 by CDG1. Functionally, phosphatase that acts as a positive regulator of brassinosteroid (BR) signaling. Dephosphorylates BES1, a transcription factor that regulates the expression of BR-response genes, thereby playing an important role in the regulation of response to BRs. Inactivates the negative regulator of BR signaling ASK7/BIN2 by dephosphorylation at 'Tyr-200'. The sequence is that of Serine/threonine-protein phosphatase BSU1 (BSU1) from Arabidopsis thaliana (Mouse-ear cress).